A 759-amino-acid chain; its full sequence is 1,4-alpha-glucan branching enzyme GlgB (759 aa).

The Nucleophile role is filled by aspartate 431. Catalysis depends on glutamate 484, which acts as the Proton donor.

It belongs to the glycosyl hydrolase 13 family. GlgB subfamily. In terms of assembly, monomer.

The catalysed reaction is Transfers a segment of a (1-&gt;4)-alpha-D-glucan chain to a primary hydroxy group in a similar glucan chain.. It functions in the pathway glycan biosynthesis; glycogen biosynthesis. Catalyzes the formation of the alpha-1,6-glucosidic linkages in glycogen by scission of a 1,4-alpha-linked oligosaccharide from growing alpha-1,4-glucan chains and the subsequent attachment of the oligosaccharide to the alpha-1,6 position. In Prochlorococcus marinus (strain MIT 9211), this protein is 1,4-alpha-glucan branching enzyme GlgB.